A 62-amino-acid polypeptide reads, in one-letter code: Photosystem II reaction center protein Z (62 aa).

Helical transmembrane passes span 8–28 and 41–61; these read AVFA…VVFA and FSGT…NSLI.

This sequence belongs to the PsbZ family. As to quaternary structure, PSII is composed of 1 copy each of membrane proteins PsbA, PsbB, PsbC, PsbD, PsbE, PsbF, PsbH, PsbI, PsbJ, PsbK, PsbL, PsbM, PsbT, PsbY, PsbZ, Psb30/Ycf12, at least 3 peripheral proteins of the oxygen-evolving complex and a large number of cofactors. It forms dimeric complexes.

The protein resides in the plastid. Its subcellular location is the chloroplast thylakoid membrane. In terms of biological role, may control the interaction of photosystem II (PSII) cores with the light-harvesting antenna, regulates electron flow through the 2 photosystem reaction centers. PSII is a light-driven water plastoquinone oxidoreductase, using light energy to abstract electrons from H(2)O, generating a proton gradient subsequently used for ATP formation. The protein is Photosystem II reaction center protein Z of Jasminum nudiflorum (Winter jasmine).